A 498-amino-acid polypeptide reads, in one-letter code: Histone-lysine N-methyltransferase SET5 (498 aa).

The tract at residues 68–94 is disordered; sequence KPNDGCTSRSTSCPGGKKKKKSKTDTS. Residues 108-415 form the SET domain; that stretch reads AGIRGVYFDP…PDDELVISYI (308 aa).

Belongs to the class V-like SAM-binding methyltransferase superfamily. Histone-lysine methyltransferase family. SET5 subfamily.

It localises to the nucleus. The protein resides in the chromosome. Its subcellular location is the cytoplasm. It carries out the reaction L-lysyl-[histone] + S-adenosyl-L-methionine = N(6)-methyl-L-lysyl-[histone] + S-adenosyl-L-homocysteine + H(+). Histone methyltransferase that monomethylates 'Lys-5', 'Lys-8' and 'Lys-12' of histone H4 (H4K5me1, H4K8me1 and H4K12me1, respectively), thereby controlling gene expression and remodeling chromatin structures. The chain is Histone-lysine N-methyltransferase SET5 (SET5) from Mycosarcoma maydis (Corn smut fungus).